The following is a 380-amino-acid chain: N-acetylneuraminate epimerase (380 aa).

The N-terminal stretch at 1–21 (MKFTKTALFTVLAATAFAAQA) is a signal peptide. Kelch repeat units follow at residues 42 to 86 (TVYV…AGVN), 88 to 140 (KLYV…AADG), 142 to 176 (KIYF…AIFD), 177 to 222 (PYFN…AIKD), 225 to 274 (LLVV…IAGG), 296 to 349 (ANYE…SYNN), and 351 to 380 (VLLI…LTVE). Glu-231 functions as the Proton acceptor in the catalytic mechanism.

This sequence belongs to the NanM family. Homodimer.

Its subcellular location is the periplasm. It catalyses the reaction N-acetyl-alpha-neuraminate = N-acetyl-beta-neuraminate. Converts alpha-N-acetylneuranimic acid (Neu5Ac) to the beta-anomer, accelerating the equilibrium between the alpha- and beta-anomers. Probably facilitates sialidase-negative bacteria to compete successfully for limited amounts of extracellular Neu5Ac, which is likely taken up in the beta-anomer. In addition, the rapid removal of sialic acid from solution might be advantageous to the bacterium to damp down host responses. In Pasteurella multocida (strain Pm70), this protein is N-acetylneuraminate epimerase.